The sequence spans 151 residues: UPF0178 protein PFL_5989 (151 aa).

The protein belongs to the UPF0178 family.

The chain is UPF0178 protein PFL_5989 from Pseudomonas fluorescens (strain ATCC BAA-477 / NRRL B-23932 / Pf-5).